The primary structure comprises 303 residues: Centromere protein O (303 aa).

Residues 38-77 (AALRKNQELVLELRKKRDELKAKIERHKAEIQAFRGREEA) are a coiled coil.

This sequence belongs to the CENP-O/MCM21 family.

It localises to the nucleus. It is found in the chromosome. Its subcellular location is the centromere. Probable component of a centromeric complex involved in assembly of kinetochore proteins, mitotic progression and chromosome segregation. The protein is Centromere protein O (cenpo) of Xenopus tropicalis (Western clawed frog).